We begin with the raw amino-acid sequence, 209 residues long: Putative thymidylate synthase (209 aa).

Cys137 is a catalytic residue.

The protein belongs to the thymidylate synthase family. Archaeal-type ThyA subfamily. Monomer.

The protein resides in the cytoplasm. It participates in pyrimidine metabolism; dTTP biosynthesis. Functionally, may catalyze the biosynthesis of dTMP using an unknown cosubstrate. The protein is Putative thymidylate synthase of Methanopyrus kandleri (strain AV19 / DSM 6324 / JCM 9639 / NBRC 100938).